We begin with the raw amino-acid sequence, 383 residues long: ATP phosphoribosyltransferase regulatory subunit (383 aa).

It belongs to the class-II aminoacyl-tRNA synthetase family. HisZ subfamily. As to quaternary structure, heteromultimer composed of HisG and HisZ subunits.

The protein localises to the cytoplasm. Its pathway is amino-acid biosynthesis; L-histidine biosynthesis; L-histidine from 5-phospho-alpha-D-ribose 1-diphosphate: step 1/9. Its function is as follows. Required for the first step of histidine biosynthesis. May allow the feedback regulation of ATP phosphoribosyltransferase activity by histidine. The polypeptide is ATP phosphoribosyltransferase regulatory subunit (Lactiplantibacillus plantarum (strain ATCC BAA-793 / NCIMB 8826 / WCFS1) (Lactobacillus plantarum)).